Consider the following 160-residue polypeptide: Cytochrome b6-f complex subunit 4 (160 aa).

Helical transmembrane passes span 36–56, 95–115, and 131–151; these read LLYIFPVVILGTIACTVGLAV, LLGVLLMAAVPAGLLTVPFLE, and TVFLIGTVVSIWLGIGAALPI.

The protein belongs to the cytochrome b family. PetD subfamily. In terms of assembly, the 4 large subunits of the cytochrome b6-f complex are cytochrome b6, subunit IV (17 kDa polypeptide, petD), cytochrome f and the Rieske protein, while the 4 small subunits are petG, petL, petM and petN. The complex functions as a dimer.

Its subcellular location is the plastid. It is found in the chloroplast thylakoid membrane. In terms of biological role, component of the cytochrome b6-f complex, which mediates electron transfer between photosystem II (PSII) and photosystem I (PSI), cyclic electron flow around PSI, and state transitions. This Physcomitrium patens (Spreading-leaved earth moss) protein is Cytochrome b6-f complex subunit 4.